The chain runs to 306 residues: Putative S-adenosyl-L-methionine-dependent methyltransferase FRAAL5401 (306 aa).

S-adenosyl-L-methionine-binding positions include Asp-126 and 155–156 (DL). Positions 201–225 (LSAPESRVATENRPNPKPGDEDRTK) are disordered.

This sequence belongs to the UPF0677 family.

Exhibits S-adenosyl-L-methionine-dependent methyltransferase activity. The sequence is that of Putative S-adenosyl-L-methionine-dependent methyltransferase FRAAL5401 from Frankia alni (strain DSM 45986 / CECT 9034 / ACN14a).